Here is a 283-residue protein sequence, read N- to C-terminus: Bis(5'-nucleosyl)-tetraphosphatase, symmetrical (283 aa).

Belongs to the Ap4A hydrolase family.

It carries out the reaction P(1),P(4)-bis(5'-adenosyl) tetraphosphate + H2O = 2 ADP + 2 H(+). Hydrolyzes diadenosine 5',5'''-P1,P4-tetraphosphate to yield ADP. The sequence is that of Bis(5'-nucleosyl)-tetraphosphatase, symmetrical from Cronobacter sakazakii (strain ATCC BAA-894) (Enterobacter sakazakii).